Reading from the N-terminus, the 324-residue chain is Aldo-keto reductase family 1 member C15 (324 aa).

NADP(+) is bound by residues 24–26 and Asp-51; that span reads TFA. Catalysis depends on Tyr-56, which acts as the Proton donor. His-118 is a substrate binding site. NADP(+) contacts are provided by residues 167 to 168, Gln-191, 217 to 225, and 269 to 281; these read SN, YSALGSHRD, and LAKSFNEKRIKEN.

This sequence belongs to the aldo/keto reductase family. In terms of assembly, monomer. In terms of tissue distribution, expressed in lung, specifically in bronchiolar club cells, type II alveolar cells and epithelial cells of the duct of the bronchial gland (at protein level). Expressed in gastric parietal cells and in epithelial cells of the large intestine and colon (at protein level). Expressed in brown adipocytes (at protein level). Expressed in vascular endothelial cells (at protein level).

It is found in the cytoplasm. It carries out the reaction (2E,6E)-farnesol + NADP(+) = (2E,6E)-farnesal + NADPH + H(+). The dehydrogenase activity is inhibited by 3',3'',5',5''-tetraiodophenolphthalein, phenolphthalein, genistein, quercetin, zearalenone and diethylstilbestrol. Catalyzes the NADPH-dependent reduction of a variety of substrates including aromatic and aliphatic aldehydes, quinones, ketones, dicarbonyl compounds and 17-ketosteroids. Catalyzes the NADP(+)-dependent oxidation of aromatic, alicyclic and aliphatic alcohols, and 17beta-hydroxysteroids. To a lesser extent, can also catalyze the reduction of some aldoses and ketoses and the oxidation of some sugar alcohols. In the stomach, lung and colon tissues, mediates the reduction of farnesal and geranylgeranial into farnesol and geranylgeraniol respectively. By reducing 4-hydroxy-2-nonenal (HNE), produced during lipid peroxidation, into 1,4-dihydro-2-nonene (DHN), protects vascular endothelial cells from damage elicited by oxidized lipoproteins. This Rattus norvegicus (Rat) protein is Aldo-keto reductase family 1 member C15.